The primary structure comprises 257 residues: Insulin-induced gene 1 protein (257 aa).

The Cytoplasmic segment spans residues 1–64 (MPRLHDHVWS…ARPGSWHHDL (64 aa)). The disordered stretch occupies residues 32–54 (CPQGSGAPEPAPRSPRAGTAGCG). A helical membrane pass occupies residues 65–87 (VQRSLVLFSFGVVLALVLNLLQI). Over 88–106 (QRNVTLFPDEVIATIFSSA) the chain is Extracellular. A helical membrane pass occupies residues 107-124 (WWVPPCCGTAAAVVGLLY). Residues 125–139 (PCIDSHLGEPHKFKR) are Cytoplasmic-facing. Residues K136 and K138 each participate in a glycyl lysine isopeptide (Lys-Gly) (interchain with G-Cter in ubiquitin) cross-link. The chain crosses the membrane as a helical span at residues 140 to 162 (EWASVMRCIAVFVGINHASAKLD). Over 163 to 165 (FAN) the chain is Extracellular. A helical transmembrane segment spans residues 166–184 (NVQLSLTLAALSLGLWWTF). Over 185-189 (DRSRS) the chain is Cytoplasmic. Residue S187 is modified to Phosphoserine. A helical transmembrane segment spans residues 190–211 (GLGLGITIAFLATLITQFLVYN). Residues 212–225 (GVYQYTSPDFLYIR) lie on the Extracellular side of the membrane. The chain crosses the membrane as a helical span at residues 226–243 (SWLPCIFFSGGVTVGNIG). Over 244–257 (RQLAMGVPEKPHSD) the chain is Cytoplasmic. The KxHxx signature appears at 251–257 (PEKPHSD).

Belongs to the INSIG family. Interacts with SCAP; interaction is direct and only takes place in the presence of sterols; it prevents interaction between SCAP and the coat protein complex II (COPII). Associates with the SCAP-SREBP complex (composed of SCAP and SREBF1/SREBP1 or SREBF2/SREBP2); association is mediated via its interaction with SCAP and only takes place in the presence of sterols. Interaction with SCAP is mutually exclusive with PAQR3. Interacts with HMGCR (via its SSD); the interaction, accelerated by sterols, leads to the recruitment of HMGCR to AMFR/gp78 for its ubiquitination by the sterol-mediated ERAD pathway. Interacts with AMFR/gp78 (via its membrane domain); the interaction recruits HMCR at the ER membrane for its ubiquitination and degradation by the sterol-mediated ERAD pathway. Interacts with SOAT2/ACAT2; leading to promote recruitment of AMFR/gp78 and subsequent ubiquitination of SOAT2/ACAT2. Interacts with RNF139. Interacts with RNF145. In terms of processing, phosphorylation at Ser-187 by PCK1 reduces binding to oxysterol, disrupting the interaction between INSIG1 and SCAP, thereby promoting nuclear translocation of SREBP proteins (SREBF1/SREBP1 or SREBF2/SREBP2) and subsequent transcription of downstream lipogenesis-related genes. Post-translationally, ubiquitinated by AMFR/gp78 in response to sterol deprivation, leading to its degradation: when the SCAP-SREBP complex becomes dissociated from INSIG1, INSIG1 is then ubiquitinated and degraded in proteasomes. Although ubiquitination is required for rapid INSIG1 degradation, it is not required for release of the SCAP-SREBP complex. Ubiquitinated by RNF139.

Its subcellular location is the endoplasmic reticulum membrane. Its function is as follows. Oxysterol-binding protein that mediates feedback control of cholesterol synthesis by controlling both endoplasmic reticulum to Golgi transport of SCAP and degradation of HMGCR. Acts as a negative regulator of cholesterol biosynthesis by mediating the retention of the SCAP-SREBP complex in the endoplasmic reticulum, thereby blocking the processing of sterol regulatory element-binding proteins (SREBPs) SREBF1/SREBP1 and SREBF2/SREBP2. Binds oxysterol, including 25-hydroxycholesterol, regulating interaction with SCAP and retention of the SCAP-SREBP complex in the endoplasmic reticulum. In presence of oxysterol, interacts with SCAP, retaining the SCAP-SREBP complex in the endoplasmic reticulum, thereby preventing SCAP from escorting SREBF1/SREBP1 and SREBF2/SREBP2 to the Golgi. Sterol deprivation or phosphorylation by PCK1 reduce oxysterol-binding, disrupting the interaction between INSIG1 and SCAP, thereby promoting Golgi transport of the SCAP-SREBP complex, followed by processing and nuclear translocation of SREBF1/SREBP1 and SREBF2/SREBP2. Also regulates cholesterol synthesis by regulating degradation of HMGCR: initiates the sterol-mediated ubiquitin-mediated endoplasmic reticulum-associated degradation (ERAD) of HMGCR via recruitment of the reductase to the ubiquitin ligases AMFR/gp78 and/or RNF139. Also regulates degradation of SOAT2/ACAT2 when the lipid levels are low: initiates the ubiquitin-mediated degradation of SOAT2/ACAT2 via recruitment of the ubiquitin ligases AMFR/gp78. In Cricetulus griseus (Chinese hamster), this protein is Insulin-induced gene 1 protein.